The following is a 436-amino-acid chain: RNA-binding motif, single-stranded-interacting protein 3 (436 aa).

The interval A28 to Q56 is disordered. Over residues A30 to P39 the composition is skewed to pro residues. Low complexity predominate over residues S40–S53. 2 RRM domains span residues T60–Q133 and T139–G224. Residues T398–T421 show a composition bias toward polar residues. Positions T398–P436 are disordered.

Its subcellular location is the cytoplasm. In terms of biological role, binds poly(A) and poly(U) oligoribonucleotides. In Pongo abelii (Sumatran orangutan), this protein is RNA-binding motif, single-stranded-interacting protein 3 (RBMS3).